Reading from the N-terminus, the 503-residue chain is Probable protein kinase UbiB (503 aa).

A helical membrane pass occupies residues 13 to 35; the sequence is TFYRYRLAGLCASLMGSGWICAL. The 372-residue stretch at 120 to 491 folds into the Protein kinase domain; that stretch reads EFETEPIASA…QQRQSLWLAV (372 aa). ATP contacts are provided by residues 126-134 and lysine 148; that span reads IASASIAQV. Catalysis depends on aspartate 283, which acts as the Proton acceptor. The chain crosses the membrane as a helical span at residues 485–502; the sequence is QSLWLAVIAVVLLLILLL.

Belongs to the ABC1 family. UbiB subfamily.

It is found in the cell inner membrane. Its pathway is cofactor biosynthesis; ubiquinone biosynthesis [regulation]. Functionally, is probably a protein kinase regulator of UbiI activity which is involved in aerobic coenzyme Q (ubiquinone) biosynthesis. The polypeptide is Probable protein kinase UbiB (Neisseria meningitidis serogroup A / serotype 4A (strain DSM 15465 / Z2491)).